A 54-amino-acid chain; its full sequence is Large ribosomal subunit protein bL33 (54 aa).

The protein belongs to the bacterial ribosomal protein bL33 family.

This chain is Large ribosomal subunit protein bL33, found in Parafrankia sp. (strain EAN1pec).